The following is a 40-amino-acid chain: Large ribosomal subunit protein bL36A (40 aa).

Belongs to the bacterial ribosomal protein bL36 family.

The sequence is that of Large ribosomal subunit protein bL36A from Kineococcus radiotolerans (strain ATCC BAA-149 / DSM 14245 / SRS30216).